A 193-amino-acid chain; its full sequence is Phosphoheptose isomerase (193 aa).

The 157-residue stretch at 37 to 193 (LANAFKAGGK…QLIEKEMADQ (157 aa)) folds into the SIS domain. 52 to 54 (NGG) lines the substrate pocket. Positions 61 and 65 each coordinate Zn(2+). Substrate contacts are provided by residues Glu-65, 93-94 (ND), 119-121 (STS), Ser-124, and Gln-172. Residues Gln-172 and His-180 each coordinate Zn(2+).

It belongs to the SIS family. GmhA subfamily. Homotetramer. Requires Zn(2+) as cofactor.

The protein localises to the cytoplasm. It catalyses the reaction 2 D-sedoheptulose 7-phosphate = D-glycero-alpha-D-manno-heptose 7-phosphate + D-glycero-beta-D-manno-heptose 7-phosphate. It participates in carbohydrate biosynthesis; D-glycero-D-manno-heptose 7-phosphate biosynthesis; D-glycero-alpha-D-manno-heptose 7-phosphate and D-glycero-beta-D-manno-heptose 7-phosphate from sedoheptulose 7-phosphate: step 1/1. Its function is as follows. Catalyzes the isomerization of sedoheptulose 7-phosphate in D-glycero-D-manno-heptose 7-phosphate. The sequence is that of Phosphoheptose isomerase from Pectobacterium atrosepticum (strain SCRI 1043 / ATCC BAA-672) (Erwinia carotovora subsp. atroseptica).